A 111-amino-acid chain; its full sequence is uncharacterized protein (111 aa).

Transmembrane regions (helical) follow at residues L18–S38 and L42–P62.

The protein localises to the membrane. This is an uncharacterized protein from Saccharomyces cerevisiae (strain ATCC 204508 / S288c) (Baker's yeast).